Reading from the N-terminus, the 64-residue chain is Cytochrome c oxidase subunit 2 (64 aa).

The Mitochondrial intermembrane segment spans residues 1 to 14 (MAHPSQLGFQDAAS). A helical transmembrane segment spans residues 15–45 (PMMEELLHFHDHALMVVFLISTFVLYIILTM). Topologically, residues 46-64 (LTTKLTDKLILESHEIEII) are mitochondrial matrix.

It belongs to the cytochrome c oxidase subunit 2 family. As to quaternary structure, component of the cytochrome c oxidase (complex IV, CIV), a multisubunit enzyme composed of 14 subunits. The complex is composed of a catalytic core of 3 subunits MT-CO1, MT-CO2 and MT-CO3, encoded in the mitochondrial DNA, and 11 supernumerary subunits COX4I, COX5A, COX5B, COX6A, COX6B, COX6C, COX7A, COX7B, COX7C, COX8 and NDUFA4, which are encoded in the nuclear genome. The complex exists as a monomer or a dimer and forms supercomplexes (SCs) in the inner mitochondrial membrane with NADH-ubiquinone oxidoreductase (complex I, CI) and ubiquinol-cytochrome c oxidoreductase (cytochrome b-c1 complex, complex III, CIII), resulting in different assemblies (supercomplex SCI(1)III(2)IV(1) and megacomplex MCI(2)III(2)IV(2)). Found in a complex with TMEM177, COA6, COX18, COX20, SCO1 and SCO2. Interacts with TMEM177 in a COX20-dependent manner. Interacts with COX20. Interacts with COX16. Cu cation serves as cofactor.

The protein localises to the mitochondrion inner membrane. It carries out the reaction 4 Fe(II)-[cytochrome c] + O2 + 8 H(+)(in) = 4 Fe(III)-[cytochrome c] + 2 H2O + 4 H(+)(out). Component of the cytochrome c oxidase, the last enzyme in the mitochondrial electron transport chain which drives oxidative phosphorylation. The respiratory chain contains 3 multisubunit complexes succinate dehydrogenase (complex II, CII), ubiquinol-cytochrome c oxidoreductase (cytochrome b-c1 complex, complex III, CIII) and cytochrome c oxidase (complex IV, CIV), that cooperate to transfer electrons derived from NADH and succinate to molecular oxygen, creating an electrochemical gradient over the inner membrane that drives transmembrane transport and the ATP synthase. Cytochrome c oxidase is the component of the respiratory chain that catalyzes the reduction of oxygen to water. Electrons originating from reduced cytochrome c in the intermembrane space (IMS) are transferred via the dinuclear copper A center (CU(A)) of subunit 2 and heme A of subunit 1 to the active site in subunit 1, a binuclear center (BNC) formed by heme A3 and copper B (CU(B)). The BNC reduces molecular oxygen to 2 water molecules using 4 electrons from cytochrome c in the IMS and 4 protons from the mitochondrial matrix. In Geophagus steindachneri (Red hump earth eater), this protein is Cytochrome c oxidase subunit 2 (mt-co2).